The chain runs to 630 residues: MLKLTSRVGPKRLSSGLKSSSFKVNATIISKKFQSSLNSKPNEVYTKLSDSEDPKRHQFFQYTWGSWMKNDQSEKSKRETKFSIEGITKLLQDLNVESKNQRNIDKSGEPFVKAPSQLKDGSYVLTQNLTSNLIGKEDSLLVKSIASIHEGKHNRIYKVTLSTGKELVLRIPYKLESEYSISQKIKSEVATMDFLNLKLGANVPKVVAYGANKVNSLQSPFILMEHIEGDLLMKQWDPLVADETEGSQEKLKSVIEPIAAFQEKLLSITFNKFGSLYFNDDVSVTDQSSLPYNGEENPLLTKRWRIGPSVEKSFSKNKNQLSEKEIKQYSRSIDADKPLETITSIAGIELENLRNRLALAQADSGNKVENVELIQKMIATFENLKTMSTKLFNPNSQSLMNAEELFKPRLYCPDLDPLNVILNSNKNNEPYFVDFEYTSIKPFILSSYPSFVGYQGAKIYNLEEDIPGYSEMDEVEKQQYQFMYYKTRNERLWELELNSRKHDLIAVASPHVKVLKSPYVQALDFKNDKDYLYIEGSIVQLQAMWEAYVANELCNATETEFPIAFTAEYLDEHQKDIEDYQMEIVSTPFAATSGWVPQDMFDSLKEQGIIVETENGDFKVETENVLKESE.

A mitochondrion-targeting transit peptide spans 1-40 (MLKLTSRVGPKRLSSGLKSSSFKVNATIISKKFQSSLNSK).

It belongs to the AIM9 family.

It is found in the mitochondrion. This is Altered inheritance of mitochondria protein 9, mitochondrial (AIM9) from Debaryomyces hansenii (strain ATCC 36239 / CBS 767 / BCRC 21394 / JCM 1990 / NBRC 0083 / IGC 2968) (Yeast).